Reading from the N-terminus, the 394-residue chain is NAD(P)H-quinone oxidoreductase subunit H (394 aa).

The protein belongs to the complex I 49 kDa subunit family. NDH-1 can be composed of about 15 different subunits; different subcomplexes with different compositions have been identified which probably have different functions.

The protein resides in the cellular thylakoid membrane. It carries out the reaction a plastoquinone + NADH + (n+1) H(+)(in) = a plastoquinol + NAD(+) + n H(+)(out). The catalysed reaction is a plastoquinone + NADPH + (n+1) H(+)(in) = a plastoquinol + NADP(+) + n H(+)(out). In terms of biological role, NDH-1 shuttles electrons from an unknown electron donor, via FMN and iron-sulfur (Fe-S) centers, to quinones in the respiratory and/or the photosynthetic chain. The immediate electron acceptor for the enzyme in this species is believed to be plastoquinone. Couples the redox reaction to proton translocation, and thus conserves the redox energy in a proton gradient. Cyanobacterial NDH-1 also plays a role in inorganic carbon-concentration. The protein is NAD(P)H-quinone oxidoreductase subunit H of Parasynechococcus marenigrum (strain WH8102).